A 713-amino-acid polypeptide reads, in one-letter code: MDLLGDQHFAAQQPPLFDATPSSLKEDAEELIAETIAAWDSIVSQIQTENATFLTFYSSTSPSKDLRDASTAVGRLFNDAEIELYSRQDMFERVDQVLQQQDKQVVASLDEESLYYIQKLHRRFHQNGCGIAEEGQRVTFKTKMKRLGHLVQQCNKNLNEDKSGVWLGLDELDGIPQSLISRLKQGDGENSDHLWLPTKVPFSSPAITNAKSEATRKRIYCAIQNRMEMNVPLFREIVLLRDETARLLGYADHATLKTADKMMQTPQAVEALLSEIRTAVAPLAAQDVEELLEIKRNEAESRGTTADELYFWDLAYYSARRGEAEKKISSSISEYFELNTTLAKLLSIIEHLFGTRFRRVNAAGRDEAAGSLIWHKDVQMYSVWNVDGPKEFLGTLFSATGEPPRPPTPPQSLVIPTALQGYENTDGSLFLASSALVMNYVRPTDTRPTLLSLDEVRKLFHEIGHLLHSQWTQTKYAALHHVDRDFVEAPSMMLEQFFWVEQHIKDVSFHYSHINSKMKDMWKATLVDQDETNPPEKPAQLSDDVVFNLARANQSKAIQGQLKEVFFATYDMLVHKPASRAALEALNLTELFNKTRSDVYKVRGGEALGEGWEWGHGQTVFRNILNRYDAGYYSYLLGRVFAMDIFDAGFKEKTTSREAGRRYRDMVYRVGGRQAEMKTMTDYLGHEPSTHPYLAWLQGTRIGDSGPTVAVPT.

H461 contributes to the Zn(2+) binding site. E462 is an active-site residue. Residues H465 and H468 each contribute to the Zn(2+) site.

The protein belongs to the peptidase M3 family. Monomer. It depends on Zn(2+) as a cofactor.

It functions in the pathway mycotoxin biosynthesis. Its function is as follows. Oligopeptidase; part of the gene cluster that mediates the biosynthesis of the phomopsins, a group of hexapeptide mycotoxins which infects lupins and causes lupinosis disease in livestock. Within the pathway, phomG and phomG' are probably involved in the processing of the phomA and phomA' precursors. The pathway starts with the processing of the precursor phomA by several endopeptidases including kexin proteases as well as the cluster-specific S41 family peptidase phomP1 and the oligopeptidase phomG to produce 10 identical copies of the hexapeptide Tyr-Val-Ile-Pro-Ile-Asp. After being excised from the precursor peptide, the core peptides are cyclized and modified post-translationally by enzymes encoded within the gene cluster. The timing and order of proteolysis of the phomA precursor and PTMs are still unknown. Two tyrosinase-like enzymes, phomQ1 and phomQ2, catalyze the chlorination and hydroxylation of Tyr, respectively. PhomYb, is proposed to be involved in the construction of the macrocyclic structure. The other 4 ustYa family proteins may be involved in PTMs that generate the unique structure of phomopsin A. PhomYa is required for the hydroxylation of C-beta of Tyr. PhomYc, phomYd, and phomYe are responsible for the biosynthesis of 2,3-dehydroisoleucine (dIle), 2,3-dehydroaspartic acid (dAsp), and 3,4-dehydroproline (dPro), respectively. While dIle formation by phomYc is indispensable for the installation of dAsp by phomYd, the order of the other PTMs have not been elucidated yet. Most of the biosynthetic enzymes likely have broad substrate specificity, and thus, there might be a metabolic grid from a precursor to phomopsin A. The enzyme(s) responsible for the biosynthesis of 3,4-dehydrovaline (dVal) have also not been identified yet. Finally, phomM acts as an S-adenosylmethionine-dependent alpha-N-methyltransferase that catalyzes two successive N-methylation reactions, converting N-desmethyl-phomopsin A to phomopsin A and phomopsin A further to an N,N-dimethylated congener called phomopsin E. In Diaporthe leptostromiformis (Lupinosis disease fungus), this protein is Oligopeptidase PhomG.